The primary structure comprises 437 residues: Glutamate-1-semialdehyde 2,1-aminomutase (437 aa).

Residue K272 is modified to N6-(pyridoxal phosphate)lysine.

Belongs to the class-III pyridoxal-phosphate-dependent aminotransferase family. HemL subfamily. Homodimer. Pyridoxal 5'-phosphate is required as a cofactor.

The protein resides in the cytoplasm. It catalyses the reaction (S)-4-amino-5-oxopentanoate = 5-aminolevulinate. It functions in the pathway porphyrin-containing compound metabolism; protoporphyrin-IX biosynthesis; 5-aminolevulinate from L-glutamyl-tRNA(Glu): step 2/2. The polypeptide is Glutamate-1-semialdehyde 2,1-aminomutase (Moorella thermoacetica (strain ATCC 39073 / JCM 9320)).